The chain runs to 182 residues: Adenine phosphoribosyltransferase 4 (182 aa).

Belongs to the purine/pyrimidine phosphoribosyltransferase family. Homodimer.

The protein resides in the cytoplasm. The enzyme catalyses AMP + diphosphate = 5-phospho-alpha-D-ribose 1-diphosphate + adenine. The protein operates within purine metabolism; AMP biosynthesis via salvage pathway; AMP from adenine: step 1/1. Functionally, catalyzes a salvage reaction resulting in the formation of AMP, that is energically less costly than de novo synthesis. May contribute to the recycling of adenine into adenylate nucleotides and the inactivation of cytokinins by phosphoribosylation. Possesses low activity toward adenine, but can efficiently convert cytokinins from free bases (active form) to the corresponding nucleotides (inactive form). This Arabidopsis thaliana (Mouse-ear cress) protein is Adenine phosphoribosyltransferase 4 (APT4).